A 67-amino-acid polypeptide reads, in one-letter code: MSVALKKFFSKRGQLSLEFSVLVLAVITAAILLGYHLIVSSKAVQESNIDTINNTHNTAIDALSEVS.

Positions 1 to 13 (MSVALKKFFSKRG) are excised as a propeptide. The QXSXEXXXL signature appears at 14-22 (QLSLEFSVL).

In terms of processing, the N-terminus is cleaved by the prepilin peptidase EppA, which recognizes the class III signal sequence. N-glycosylated. Glycosylation is AglB-dependent. The N-glycosylation does not occur unless the signal peptide has been cleaved first.

The protein localises to the secreted. The protein resides in the cell surface. It localises to the fimbrium. Functionally, minor component of the type IV-like pili. Essential for pili formation. In Methanococcus maripaludis (strain DSM 14266 / JCM 13030 / NBRC 101832 / S2 / LL), this protein is Minor structural pilin EpdD.